We begin with the raw amino-acid sequence, 44 residues long: Opistoporin-2 (44 aa).

As to expression, expressed by the venom gland.

The protein resides in the secreted. It is found in the target cell membrane. Functionally, at high concentrations, acts as a pore former in cellular membranes and causes the leakage of the cells. At submicromolar concentrations, degranulates granulocytes and has a weak hemolytic activity against human erythrocytes. Also strongly inhibits the production of superoxide anions. Has a strong antibacterial activity against Gram-negative bacteria but is less active against Gram-positive bacteria. Also has antifungal activity. The polypeptide is Opistoporin-2 (Opistophthalmus carinatus (African yellow leg scorpion)).